Reading from the N-terminus, the 4265-residue chain is MEQPNSKGYSLGRTPQGPECSSAPAVQVGTHRGLEYNPGKILPGSDYGLGNPPALDPKLPHLPLPPAPPTLSDLGQPRKSPLTGTDKKYPLMKQRGFYSDILSPGTLDQLGEVCRGPRMSQNLLRQADLDKFTPRVGSFEVPEDFQERMEQQCIGSTTRLLAQTDFPLQAYEPKMQVPFQVLPGQHPRKIEIERRKQQYLSLDIEQLLFSQGIDSNKLMPRHLDHQHPQTIEQGHDPIFPIYLPLKVFDNEDFDCRTPREWINMGLEPGSLDRKPVPGKALLPTDDFLGHEDPKSQKLKYKWCEVGVLDYDEEKKLYLVHKTDEKGLVRDEMGRPILNAGVTTEGRPPLQVCQYWVPRIQLLFCAEDPCMFAQRVVQANALRKNTEALLLYNLYVDCMPSDGQHVISEQSLSKIKQWALSTPRMRKGPSVLEHLSSLAREVSLDYERSMNKINFDHVVSSKPETFSYVTLPKKEEEQVPERGLVSVPKYHFWEQKEDFTFVSLLTRPEVITALSKVRAECNKVTAMSLFHSSLSKYSHLEEFEQIQSQTFSQVQMFLKDSWISSLKVAMRSSLRDMSKGWYNLYETNWEVYLMSKLRKLMELVKYMLQDTLRFLVQDSLASFSQFISDTCCSVLNCTDDMVWGDDLINSPYRPRKNPLFIMDLVLDSSGVHYSTPLEQFEASLLNLFDKGILATHAVPQLEKLVMEDIFISGDPLLESVGLHEPLVEELRATIASAVSKAMIPLQAYAKEYRKYLELNNNDIASFLKTYQTQGLLAQEVREVVLTHLREKEILDSSLPSSIIIGPFYINTDNVKQSLSKKRKALATSVLDILAKNLHKEVDSICEEFRSISRKIYEKPNSIEELAELREWMKGIPERLVGLEERIVKVMDDYQVMDEFLYNLSSDDFNDKWIASNWPSKILGQIELVQQQHVEDEEKFRKIQIMDQNNFQEKLEGLQLVVAGFSIHVEISRAHEIANEVRRVKKQLKDCQQLAMLYNNRERIFSLPITNYDKLSRMVKEFQPYLDLWTTASDWLRWSESWMNDPLSAIDAEQLEKNVVEAFKTMHKCVKQFKDMPACQEVALDIRARIEEFKPYIPLIQGLRNPGMRIRHWETLSNQININVRPKANLTFARCLEMNLQDHIESISKVAEVAGKEYAIEQALDKMEKEWSTILFNVLPYKATDTYILKSPDEASQLLDDHIVMTQNMSFSPYKKPFEQRINSWENKLKLTQEVLEEWLNCQRSWLYLEPIFSSEDINQQLPVESKRYQTMERIWKKIMKNAYENREVINVCSDLRMLDSLRDCNKILDLVQKGLSEYLETKRSAFPRFYFLSDDELLEILSQTKDPTAVQPHLRKCFENIARLLFQEDLEITHMYSAEGEEVQLCFSIYPSSNVEDWLREVERSMKASVHDIIEKAIRAYPTMPRTQWVLNWPGQVTIAGCQTYWTMEVAEALEAGNLRSQLFPQLCQQLSDLVALVRGKLSRMQRAVLSALIVIEVHAKDVVSKLIQENVVSVNDFQWISQLRYYWTNNDLYIRAVNAEFIYGYEYLGNSGRLVITPLTDRCYLTLTGALHLKFGGAPAGPAGTGKTETTKDLGKALAIQTVVFNCSDQLDFMAMGKFFKGLASAGAWACFDEFNRIDIEVLSVVAQQITTIQKAQQQRVERFMFEGVEIPLVPSCAVFITMNPGYAGRTELPDNLKALFRPVAMMVPDYAMITEISLYSFGFNEASVLAKKITTTFKLSSEQLSSQDHYDFGMRAVKTVISAAGNLKRENPSMNEELICLRAIRDVNVPKFLQEDLKLFSGIVSDLFPTIKEEDTDYGILDEAIREACRNSNLKDVEGFLTKCIQLYETTVVRHGLMLVGPTGSGKSTCYRVLAAAMTSLKGQPSISGGMYEAVNYYVLNPKSITMGQLYGEFDLLTHEWTDGIFSSFIRAGAITSDTNKKWYMFDGPVDAIWIENMNTVLDDNKKLCLSSGEIIKLTEAMTMMFEVQDLAVASPATVSRCGMVYLEPSILGLMPFIECWLRKLPPLLKPYEEHFKALFVSFLEESISFVRSSVKEVIASTNCNLTMSLLKLLDCFFKPFLPREGLKKIPSEKLSRIVELIEPWFIFSLIWSVGATGDSSGRTSFSHWLRLKMENEQLTLLFPEEGLVFDYRLEDAGISGTNDSEDEEEEYKQVAWVKWMDSSAPFTMVPDTNYCNIIVPTMDTVQMSHLLDMLLTNKKPVLCIGPTGTGKTLTISDKLLKNLALDYISHFLTFSARTSANQTQDFIDSKLDKRRKGVFGPPLGRNFIFFIDDLNMPALETYGAQPPIELLRQWMDHGGWYDRKIIGAFKNLVDINFVCAMGPPGGGRNTVTPRLMRHFNYLSFAEMDEVSKKRIFSTILGNWLDGLLGEKSYRERVPGAPHIAHFTEPLVEATIMVYATITSQLLPTPAKSHYTFNLRDLSKVFQGMLMADPAKVEDQVQLLRLWYHENCRVFRDRLVNEEDRSWFDQLLKRCMEQWEVTFNKVCPFQPILYGDFMSPGSDVKSYELITSESKMMQVIEEYIEDYNQINTAKLKLVLFMDAMSHICRISRTLRQALGNALLLGVGGSGRSSLTRLASHMAEYECFQIELSKNYGMSEWRDDVKKVLLKAGLQNLPITFLFSDTQIKNESFLEDINNVLNSGDIPNLYTADEQDQIVSTMRPYIQEQGLQPTKANLMAAYTGRVRSNIHMVLCMSPIGEVFRARLRQFPSLVNCCTIDWFNEWPAEALKSVATVFLNEIPELESSQEEIQGLIQVCVYIHQSVSKKCIEYLAELTRHNYVTPKSYLELLHIFSILIGQKKLELKTAKNRMKSGLDKLLRTSEDVAKMQEDLESMHPLLEEAAKDTMLTMEQIKVDTAIAEETRNSVQTEEIKANEKAKKAQAIADDAQKDLDEALPALDAALASLRNLNKNDVTEVRAMQRPPPGVKLVIEAVCIMKGIKPKKVPGEKPGTKVDDYWEPGKGLLQDPGHFLESLFKFDKDNIGDVVIKAIQPYIDNEEFQPATIAKVSKACTSICQWVRAMHKYHFVAKAVEPKRQALLEAQDDLGVTQRILDEAKQRLREVEDGIATMQAKYRECITKKEELELKCEQCEQRLGRAGKLINGLSDEKVRWQETVENLQYMLNNISGDVLVAAGFVAYLGPFTGQYRTVLYDSWVKQLRSHNVPHTSEPTLIGTLGNPVKIRSWQIAGLPNDTLSVENGVINQFSQRWTHFIDPQSQANKWIKNMEKDNGLDVFKLSDRDFLRSMENAIRFGKPCLLENVGEELDPALEPVLLKQTYKQQGNTVLKLGDTVIPYHEDFRMYITTKLPNPHYTPEISTKLTLINFTLSPSGLEDQLLGQVVAEERPDLEEAKNQLIISNAKMRQELKDIEDQILYRLSSSEGNPVDDMELIKVLEASKMKAAEIQAKVRIAEQTEKDIDLTRMEYIPVAIRTQILFFCVSDLANVDPMYQYSLEWFLNIFLSGIANSERADNLKKRISNINRYLTYSLYSNVCRSLFEKHKLMFAFLLCVRIMMNEGKINQSEWRYLLSGGSISIMTENPAPDWLSDRAWRDILALSNLPTFSSFSSDFVKHLSEFRVIFDSLEPHREPLPGIWDQYLDQFQKLLVLRCLRGDKVTNAMQDFVATNLEPRFIEPQTANLSVVFKDSNSTTPLIFVLSPGTDPAADLYKFAEEMKFSKKLSAISLGQGQGPRAEAMMRSSIERGKWVFFQNCHLAPSWMPALERLIEHINPDKVHRDFRLWLTSLPSNKFPVSILQNGSKMTIEPPRGVRANLLKSYSSLGEDFLNSCHKVMEFKSLLLSLCLFHGNALERRKFGPLGFNIPYEFTDGDLRICISQLKMFLDEYDDIPYKVLKYTAGEINYGGRVTDDWDRRCIMNILEDFYNPDVLSPEHSYSASGIYHQIPPTYDLHGYLSYIKSLPLNDMPEIFGLHDNANITFAQNETFALLGTIIQLQPKSSSAGSQGREEIVEDVTQNILLKVPEPINLQWVMAKYPVLYEESMNTVLVQEVIRYNRLLQVITQTLQDLLKALKGLVVMSSQLELMAASLYNNTVPELWSAKAYPSLKPLSSWVMDLLQRLDFLQAWIQDGIPAVFWISGFFFPQAFLTGTLQNFARKFVISIDTISFDFKVMFEAPSELTQRPQVGCYIHGLFLEGARWDPEAFQLAESQPKELYTEMAVIWLLPTPNRKAQDQDFYLCPIYKTLTRAGTLSTTGHSTNYVIAVEIPTHQPQRHWIKRGVALICALDY.

The disordered stretch occupies residues 1 to 88 (MEQPNSKGYS…KSPLTGTDKK (88 aa)). A stem region spans residues 1 to 1542 (MEQPNSKGYS…YIRAVNAEFI (1542 aa)). Residues 60–69 (PHLPLPPAPP) are compositionally biased toward pro residues. AAA stretches follow at residues 1543 to 1764 (YGYE…VISA), 1824 to 2057 (EAIR…SSVK), 2189 to 2449 (TMVP…VFQG), and 2547 to 2799 (DYNQ…LTRH). A GPAGTGKT motif motif is present at residues 1581–1588 (GPAGTGKT). 1581-1588 (GPAGTGKT) contributes to the ATP binding site. The CFDEFNR motif motif lies at 1631 to 1637 (CFDEFNR). ATP contacts are provided by residues 1862 to 1869 (GPTGSGKS), 2227 to 2234 (GPTGTGKT), and 2586 to 2593 (GVGGSGRS). A stalk region spans residues 2814-3112 (FSILIGQKKL…EELELKCEQC (299 aa)). Residues 3074 to 3122 (LDEAKQRLREVEDGIATMQAKYRECITKKEELELKCEQCEQRLGRAGKL) adopt a coiled-coil conformation. AAA regions lie at residues 3197-3427 (LGNP…EIQA) and 3640-3859 (MQDF…QLKM).

The protein belongs to the dynein heavy chain family. As to quaternary structure, consists of at least two heavy chains and a number of intermediate and light chains. As to expression, expressed primarily in trachea and testis, 2 tissues containing axonemal structures. Also expressed in brain.

It localises to the cytoplasm. The protein localises to the cytoskeleton. The protein resides in the cilium axoneme. It is found in the cell projection. Its subcellular location is the cilium. It localises to the flagellum. Functionally, force generating protein of cilia required for sperm flagellum motility. Produces force towards the minus ends of microtubules. Dynein has ATPase activity; the force-producing power stroke is thought to occur on release of ADP. Required in spermatozoa for the formation of the inner dynein arms and biogenesis of the axoneme. This Homo sapiens (Human) protein is Dynein axonemal heavy chain 1.